A 61-amino-acid chain; its full sequence is Photosystem II reaction center protein K (61 aa).

Positions 1–24 are excised as a propeptide; sequence MLNIFSLICICLNSALHSSSFFFA. A helical transmembrane segment spans residues 32–52; that stretch reads FFNPIVDFMPVIPVLFFLLAL.

Belongs to the PsbK family. PSII is composed of 1 copy each of membrane proteins PsbA, PsbB, PsbC, PsbD, PsbE, PsbF, PsbH, PsbI, PsbJ, PsbK, PsbL, PsbM, PsbT, PsbX, PsbY, PsbZ, Psb30/Ycf12, at least 3 peripheral proteins of the oxygen-evolving complex and a large number of cofactors. It forms dimeric complexes.

The protein localises to the plastid. It is found in the chloroplast thylakoid membrane. In terms of biological role, one of the components of the core complex of photosystem II (PSII). PSII is a light-driven water:plastoquinone oxidoreductase that uses light energy to abstract electrons from H(2)O, generating O(2) and a proton gradient subsequently used for ATP formation. It consists of a core antenna complex that captures photons, and an electron transfer chain that converts photonic excitation into a charge separation. This is Photosystem II reaction center protein K from Drimys granadensis.